The primary structure comprises 213 residues: Methylthioribulose-1-phosphate dehydratase (213 aa).

Residues His-97 and His-99 each coordinate Zn(2+).

This sequence belongs to the aldolase class II family. MtnB subfamily. In terms of assembly, homotetramer. It depends on Zn(2+) as a cofactor.

The catalysed reaction is 5-(methylsulfanyl)-D-ribulose 1-phosphate = 5-methylsulfanyl-2,3-dioxopentyl phosphate + H2O. Its pathway is amino-acid biosynthesis; L-methionine biosynthesis via salvage pathway; L-methionine from S-methyl-5-thio-alpha-D-ribose 1-phosphate: step 2/6. Its function is as follows. Catalyzes the dehydration of methylthioribulose-1-phosphate (MTRu-1-P) into 2,3-diketo-5-methylthiopentyl-1-phosphate (DK-MTP-1-P). The protein is Methylthioribulose-1-phosphate dehydratase of Geobacillus sp. (strain WCH70).